The primary structure comprises 296 residues: Decaprenyl diphosphate synthase (296 aa).

Residues 1–58 form a disordered region; it reads MVRNERTLKSTDFPQLPPAPDDYPTFPDKSTWPVVFPMLPPSPDGGPRRPPQHTSKAV. Aspartate 76 is an active-site residue. Residue aspartate 76 coordinates Mg(2+). Substrate is bound by residues 77-80, tryptophan 81, arginine 89, histidine 93, and 121-123; these read GNGR and STE. Asparagine 124 serves as the catalytic Proton acceptor. Substrate is bound by residues tryptophan 125, arginine 127, arginine 244, and 250–252; that span reads RSS. Glutamate 263 contributes to the Mg(2+) binding site.

Belongs to the UPP synthase family. As to quaternary structure, homodimer. Requires Mg(2+) as cofactor.

The protein localises to the cell membrane. The catalysed reaction is (2Z,6E)-farnesyl diphosphate + 7 isopentenyl diphosphate = (2Z,6Z,10Z,14Z,18Z,22Z,26Z,30Z,34E)-decaprenyl diphosphate + 7 diphosphate. The enzyme catalyses n isopentenyl diphosphate + (2E,6E)-farnesyl diphosphate = a di-trans,poly-cis-polyprenyl diphosphate + n diphosphate. In terms of biological role, catalyzes the sequential condensation of isopentenyl diphosphate (IPP) in the cis configuration with (2Z,6E)-farnesyl diphosphate (Z-FPP or EZ-FPP) generating the 50 carbon product trans,polycis-decaprenyl diphosphate. When (2E,6E)-farnesyl diphosphate (E-FPP or EE-FPP) is used in vitro, both primary products decaprenyl diphosphate and (2E,6E,10E)-geranylgeranyl diphosphate (EEE-GGPP) are synthesized. M.tuberculosis does not synthesize (2E,6E,10Z)-geranylgeranyl diphosphate (EEZ-GGPP) and heptaprenyl diphosphate. Can also accept many different allylic substrates, including E-geranyl diphosphate (E-GPP), neryl diphosphate (NPP), and all-trans-geranyl-geranyl diphosphate. The sequence is that of Decaprenyl diphosphate synthase (uppS) from Mycobacterium leprae (strain TN).